The chain runs to 270 residues: ATP synthase subunit b 1 (270 aa).

The chain crosses the membrane as a helical span at residues 2-22; it reads LIDWFTVIAQLINFLVLVWLL.

The protein belongs to the ATPase B chain family. F-type ATPases have 2 components, F(1) - the catalytic core - and F(0) - the membrane proton channel. F(1) has five subunits: alpha(3), beta(3), gamma(1), delta(1), epsilon(1). F(0) has three main subunits: a(1), b(2) and c(10-14). The alpha and beta chains form an alternating ring which encloses part of the gamma chain. F(1) is attached to F(0) by a central stalk formed by the gamma and epsilon chains, while a peripheral stalk is formed by the delta and b chains.

The protein resides in the cell inner membrane. F(1)F(0) ATP synthase produces ATP from ADP in the presence of a proton or sodium gradient. F-type ATPases consist of two structural domains, F(1) containing the extramembraneous catalytic core and F(0) containing the membrane proton channel, linked together by a central stalk and a peripheral stalk. During catalysis, ATP synthesis in the catalytic domain of F(1) is coupled via a rotary mechanism of the central stalk subunits to proton translocation. Functionally, component of the F(0) channel, it forms part of the peripheral stalk, linking F(1) to F(0). The polypeptide is ATP synthase subunit b 1 (Marinomonas sp. (strain MWYL1)).